Here is a 406-residue protein sequence, read N- to C-terminus: GTPase Obg (406 aa).

Residues 1–159 form the Obg domain; it reads MRFVDEAVIT…REIRLELKVL (159 aa). The interval 120-143 is disordered; it reads GGEGGLGNTHFKSSTNRAPRKCTT. Residues 160-333 form the OBG-type G domain; that stretch reads ADVGLLGMPN…VVYYLMDQIE (174 aa). Residues 166–173, 191–195, 213–216, 283–286, and 314–316 contribute to the GTP site; these read GMPNAGKS, FTTMV, DIPG, NKLD, and SGL. 2 residues coordinate Mg(2+): S173 and T193. A disordered region spans residues 381-406; sequence ESMMDDDDDFDDDEDDGDVESIYVRD. The segment covering 383–399 has biased composition (acidic residues); sequence MMDDDDDFDDDEDDGDV.

The protein belongs to the TRAFAC class OBG-HflX-like GTPase superfamily. OBG GTPase family. Monomer. It depends on Mg(2+) as a cofactor.

The protein resides in the cytoplasm. Its function is as follows. An essential GTPase which binds GTP, GDP and possibly (p)ppGpp with moderate affinity, with high nucleotide exchange rates and a fairly low GTP hydrolysis rate. Plays a role in control of the cell cycle, stress response, ribosome biogenesis and in those bacteria that undergo differentiation, in morphogenesis control. The polypeptide is GTPase Obg (Acinetobacter baumannii (strain SDF)).